Reading from the N-terminus, the 454-residue chain is Tol-Pal system protein TolB (454 aa).

Residues 1–30 form the signal peptide; the sequence is MNDARSITRRRFMTLTGSGLAMLGGGHAFA.

Belongs to the TolB family. As to quaternary structure, the Tol-Pal system is composed of five core proteins: the inner membrane proteins TolA, TolQ and TolR, the periplasmic protein TolB and the outer membrane protein Pal. They form a network linking the inner and outer membranes and the peptidoglycan layer.

The protein localises to the periplasm. Functionally, part of the Tol-Pal system, which plays a role in outer membrane invagination during cell division and is important for maintaining outer membrane integrity. The chain is Tol-Pal system protein TolB from Bradyrhizobium diazoefficiens (strain JCM 10833 / BCRC 13528 / IAM 13628 / NBRC 14792 / USDA 110).